The primary structure comprises 374 residues: Flagellar P-ring protein 1 (374 aa).

The first 26 residues, 1–26 (MVPNLMVIKKHLIGLLLILCPLSLQA), serve as a signal peptide directing secretion.

Belongs to the FlgI family. As to quaternary structure, the basal body constitutes a major portion of the flagellar organelle and consists of four rings (L,P,S, and M) mounted on a central rod.

It is found in the periplasm. The protein localises to the bacterial flagellum basal body. Functionally, assembles around the rod to form the L-ring and probably protects the motor/basal body from shearing forces during rotation. In Photobacterium profundum (strain SS9), this protein is Flagellar P-ring protein 1.